The sequence spans 171 residues: Peptide methionine sulfoxide reductase MsrA (171 aa).

Cys-13 is a catalytic residue.

It belongs to the MsrA Met sulfoxide reductase family.

The enzyme catalyses L-methionyl-[protein] + [thioredoxin]-disulfide + H2O = L-methionyl-(S)-S-oxide-[protein] + [thioredoxin]-dithiol. It carries out the reaction [thioredoxin]-disulfide + L-methionine + H2O = L-methionine (S)-S-oxide + [thioredoxin]-dithiol. Its function is as follows. Has an important function as a repair enzyme for proteins that have been inactivated by oxidation. Catalyzes the reversible oxidation-reduction of methionine sulfoxide in proteins to methionine. In Mycobacterium sp. (strain MCS), this protein is Peptide methionine sulfoxide reductase MsrA.